We begin with the raw amino-acid sequence, 125 residues long: Small ribosomal subunit protein eS8 (125 aa).

The segment at 1–20 (MIWQGRSRRKPSGGFYRKAR) is disordered.

The protein belongs to the eukaryotic ribosomal protein eS8 family. As to quaternary structure, part of the 30S ribosomal subunit.

This chain is Small ribosomal subunit protein eS8 (rps8e), found in Archaeoglobus fulgidus (strain ATCC 49558 / DSM 4304 / JCM 9628 / NBRC 100126 / VC-16).